Reading from the N-terminus, the 85-residue chain is uncharacterized protein (85 aa).

The stretch at 17-53 forms a coiled coil; the sequence is KKRYEMLVQELLKEDDEEREKILAEELELLLDFLKKA.

This is an uncharacterized protein from Archaeoglobus fulgidus (strain ATCC 49558 / DSM 4304 / JCM 9628 / NBRC 100126 / VC-16).